The chain runs to 439 residues: ATP-dependent protease ATPase subunit HslU (439 aa).

ATP contacts are provided by residues isoleucine 17, 59-64, aspartate 251, glutamate 317, and arginine 389; that span reads GVGKTE.

Belongs to the ClpX chaperone family. HslU subfamily. In terms of assembly, a double ring-shaped homohexamer of HslV is capped on each side by a ring-shaped HslU homohexamer. The assembly of the HslU/HslV complex is dependent on binding of ATP.

It localises to the cytoplasm. Functionally, ATPase subunit of a proteasome-like degradation complex; this subunit has chaperone activity. The binding of ATP and its subsequent hydrolysis by HslU are essential for unfolding of protein substrates subsequently hydrolyzed by HslV. HslU recognizes the N-terminal part of its protein substrates and unfolds these before they are guided to HslV for hydrolysis. This chain is ATP-dependent protease ATPase subunit HslU, found in Campylobacter jejuni subsp. jejuni serotype O:6 (strain 81116 / NCTC 11828).